A 214-amino-acid chain; its full sequence is Ceramide-1-phosphate transfer protein (214 aa).

An N-acylsphingoid base 1-phosphate-binding residues include D56, K60, R106, R110, and H150.

The protein belongs to the GLTP family. In terms of tissue distribution, ubiquitous. Detected in heart, brain, placenta, lung, liver, skeletal muscle, kidney, pancreas, spleen, thymus, prostate, testis, ovary, small intestine, colon and peripheral blood leukocytes.

Its subcellular location is the cytoplasm. It is found in the cytosol. The protein localises to the golgi apparatus. It localises to the trans-Golgi network membrane. The protein resides in the cell membrane. Its subcellular location is the endosome membrane. It is found in the nucleus outer membrane. The enzyme catalyses N-(hexadecanoyl)-sphing-4-enine-1-phosphate(in) = N-(hexadecanoyl)-sphing-4-enine-1-phosphate(out). It catalyses the reaction N-(9Z-octadecenoyl)-sphing-4-enine-1-phosphate(in) = N-(9Z-octadecenoyl)-sphing-4-enine-1-phosphate(out). In terms of biological role, mediates the intracellular transfer of ceramide-1-phosphate (C1P) between organelle membranes and the cell membrane. Required for normal structure of the Golgi stacks. Can bind phosphoceramides with a variety of aliphatic chains, but has a preference for lipids with saturated C16:0 or monounsaturated C18:1 aliphatic chains, and is inefficient with phosphoceramides containing lignoceryl (C24:0). Plays a role in the regulation of the cellular levels of ceramide-1-phosphate, and thereby contributes to the regulation of phospholipase PLA2G4A activity and the release of arachidonic acid. Has no activity with galactosylceramide, lactosylceramide, sphingomyelin, phosphatidylcholine, phosphatidic acid and ceramide. C1P transfer is stimulated by phosphatidylserine in C1P source vesicles. Regulates autophagy, inflammasome mediated IL1B and IL18 processing, and pyroptosis, but not apoptosis. The protein is Ceramide-1-phosphate transfer protein of Homo sapiens (Human).